An 88-amino-acid polypeptide reads, in one-letter code: Small ribosomal subunit protein bS20 (88 aa).

This sequence belongs to the bacterial ribosomal protein bS20 family.

Binds directly to 16S ribosomal RNA. The polypeptide is Small ribosomal subunit protein bS20 (Blochmanniella floridana).